A 424-amino-acid chain; its full sequence is Serine--tRNA ligase (424 aa).

The segment covering 1–15 (MIDPKLLRTDPDAVR) has biased composition (basic and acidic residues). The interval 1–27 (MIDPKLLRTDPDAVRRSQAARGEDSSV) is disordered. Position 230 to 232 (230 to 232 (TSE)) interacts with L-serine. ATP contacts are provided by residues 261–263 (RRE) and Val277. Glu284 is a binding site for L-serine. An ATP-binding site is contributed by 348 to 351 (EITS). Thr382 serves as a coordination point for L-serine.

Belongs to the class-II aminoacyl-tRNA synthetase family. Type-1 seryl-tRNA synthetase subfamily. As to quaternary structure, homodimer. The tRNA molecule binds across the dimer.

It is found in the cytoplasm. It carries out the reaction tRNA(Ser) + L-serine + ATP = L-seryl-tRNA(Ser) + AMP + diphosphate + H(+). The catalysed reaction is tRNA(Sec) + L-serine + ATP = L-seryl-tRNA(Sec) + AMP + diphosphate + H(+). The protein operates within aminoacyl-tRNA biosynthesis; selenocysteinyl-tRNA(Sec) biosynthesis; L-seryl-tRNA(Sec) from L-serine and tRNA(Sec): step 1/1. Functionally, catalyzes the attachment of serine to tRNA(Ser). Is also able to aminoacylate tRNA(Sec) with serine, to form the misacylated tRNA L-seryl-tRNA(Sec), which will be further converted into selenocysteinyl-tRNA(Sec). In Cutibacterium acnes (strain DSM 16379 / KPA171202) (Propionibacterium acnes), this protein is Serine--tRNA ligase.